Reading from the N-terminus, the 192-residue chain is uncharacterized protein (192 aa).

This is an uncharacterized protein from Aquifex aeolicus (strain VF5).